The chain runs to 396 residues: Putative nickel insertion protein (396 aa).

Belongs to the LarC family.

This chain is Putative nickel insertion protein, found in Methanosarcina mazei (strain ATCC BAA-159 / DSM 3647 / Goe1 / Go1 / JCM 11833 / OCM 88) (Methanosarcina frisia).